Here is a 147-residue protein sequence, read N- to C-terminus: Large ribosomal subunit protein uL13 (147 aa).

The segment at 126–147 is disordered; the sequence is AGPTHPHQAQQPVPYEIKQVAQ.

This sequence belongs to the universal ribosomal protein uL13 family. As to quaternary structure, part of the 50S ribosomal subunit.

This protein is one of the early assembly proteins of the 50S ribosomal subunit, although it is not seen to bind rRNA by itself. It is important during the early stages of 50S assembly. In Parafrankia sp. (strain EAN1pec), this protein is Large ribosomal subunit protein uL13.